A 357-amino-acid polypeptide reads, in one-letter code: Ribosomal RNA large subunit methyltransferase M (357 aa).

S-adenosyl-L-methionine-binding positions include S183, 216–219 (APGG), D235, D255, and D271. Residue K300 is the Proton acceptor of the active site.

This sequence belongs to the class I-like SAM-binding methyltransferase superfamily. RNA methyltransferase RlmE family. RlmM subfamily. Monomer.

The protein resides in the cytoplasm. It catalyses the reaction cytidine(2498) in 23S rRNA + S-adenosyl-L-methionine = 2'-O-methylcytidine(2498) in 23S rRNA + S-adenosyl-L-homocysteine + H(+). In terms of biological role, catalyzes the 2'-O-methylation at nucleotide C2498 in 23S rRNA. This Pseudomonas fluorescens (strain Pf0-1) protein is Ribosomal RNA large subunit methyltransferase M.